The chain runs to 878 residues: Probable receptor-like protein kinase At4g39110 (878 aa).

A signal peptide spans 1-43 (MEIRKKPNIFTVLVIDFSSKPSMALLLAILLFLSGPSASAVAA). At 44–440 (AAVGPATGFK…GRTTGMGKHG (397 aa)) the chain is on the extracellular side. 5 N-linked (GlcNAc...) asparagine glycosylation sites follow: asparagine 170, asparagine 183, asparagine 254, asparagine 317, and asparagine 382. The helical transmembrane segment at 441–461 (MVATAGFVMMFGAFIGLGAMV) threads the bilayer. Residues 462–878 (YKWKKRPQDW…FTQFANLNGR (417 aa)) lie on the Cytoplasmic side of the membrane. The 273-residue stretch at 526 to 798 (FEASQIIGVG…GDVLWNLEYA (273 aa)) folds into the Protein kinase domain. Residues 532–540 (IGVGGFGNV) and lysine 554 each bind ATP. Aspartate 650 acts as the Proton acceptor in catalysis. A disordered region spans residues 808-844 (GKAEETENAKPDVVTPGSVPVSDPSPITPSVTTNEAA).

Belongs to the protein kinase superfamily. Ser/Thr protein kinase family.

The protein resides in the membrane. The sequence is that of Probable receptor-like protein kinase At4g39110 from Arabidopsis thaliana (Mouse-ear cress).